The following is a 123-amino-acid chain: Small ribosomal subunit protein uS12 (123 aa).

Position 89 is a 3-methylthioaspartic acid (aspartate 89).

This sequence belongs to the universal ribosomal protein uS12 family. In terms of assembly, part of the 30S ribosomal subunit. Contacts proteins S8 and S17. May interact with IF1 in the 30S initiation complex.

Functionally, with S4 and S5 plays an important role in translational accuracy. In terms of biological role, interacts with and stabilizes bases of the 16S rRNA that are involved in tRNA selection in the A site and with the mRNA backbone. Located at the interface of the 30S and 50S subunits, it traverses the body of the 30S subunit contacting proteins on the other side and probably holding the rRNA structure together. The combined cluster of proteins S8, S12 and S17 appears to hold together the shoulder and platform of the 30S subunit. In Bartonella tribocorum (strain CIP 105476 / IBS 506), this protein is Small ribosomal subunit protein uS12.